The following is a 172-amino-acid chain: Macro domain-containing protein lp_3408 (172 aa).

Positions 1–171 (MVEIKVIHGD…VFSTALAALT (171 aa)) constitute a Macro domain.

It belongs to the MacroD-type family.

This is Macro domain-containing protein lp_3408 from Lactiplantibacillus plantarum (strain ATCC BAA-793 / NCIMB 8826 / WCFS1) (Lactobacillus plantarum).